The primary structure comprises 117 residues: Cuticle protein CP1246 (117 aa).

4 repeat units span residues 1 to 17, 26 to 43, 67 to 84, and 93 to 110.

As to expression, calcified shell.

The polypeptide is Cuticle protein CP1246 (Cancer pagurus (Rock crab)).